A 620-amino-acid polypeptide reads, in one-letter code: Glutathione-regulated potassium-efflux system protein KefC (620 aa).

The next 12 membrane-spanning stretches (helical) occupy residues 4–24 (HTLL…PIAV), 26–46 (LGLG…PWGL), 54–74 (SILH…GLEL), 90–110 (GALQ…FLGL), 114–134 (VAEL…MQAM), 149–169 (FAVL…IPLL), 178–198 (LGAF…VVVL), 218–238 (VFSA…EEVG), 270–290 (GLLL…GTLV), 294–314 (LRIL…LWLV), 327–347 (WFAV…GAAQ), and 359–379 (ALTL…VLLT). An RCK N-terminal domain is found at 399–518 (QPRVIVAGFG…AGVAMPERET (120 aa)). The disordered stretch occupies residues 599-620 (QGTAEGKHSGEVADEPEVKPSI).

The protein belongs to the monovalent cation:proton antiporter 2 (CPA2) transporter (TC 2.A.37) family. KefC subfamily. As to quaternary structure, homodimer. Interacts with the regulatory subunit KefF.

It localises to the cell inner membrane. Functionally, pore-forming subunit of a potassium efflux system that confers protection against electrophiles. Catalyzes K(+)/H(+) antiport. This chain is Glutathione-regulated potassium-efflux system protein KefC, found in Salmonella paratyphi B (strain ATCC BAA-1250 / SPB7).